Reading from the N-terminus, the 705-residue chain is Catalase C (705 aa).

The interval 1-31 (MAKKPSAPNNTKPATIHDQKATRGNGGELHQ) is disordered. Catalysis depends on residues H88 and N161. Residue Y375 coordinates heme.

Belongs to the catalase family. HPII subfamily. Heme serves as cofactor.

It carries out the reaction 2 H2O2 = O2 + 2 H2O. Functionally, decomposes hydrogen peroxide into water and oxygen; serves to protect cells from the toxic effects of hydrogen peroxide. Could protect cells in nodules which have a high potential to produce hydrogen peroxide because of the strong reducing conditions required for nitrogen fixation and the action of several proteins. The polypeptide is Catalase C (katE) (Rhizobium meliloti (strain 1021) (Ensifer meliloti)).